Reading from the N-terminus, the 837-residue chain is Protein translocase subunit SecA 1 (837 aa).

Residues glutamine 85, 103-107, and aspartate 492 each bind ATP; that span reads GEGKT. Residues 791-837 are disordered; sequence KGEAINPAEGKPEAKRQPIRKDQHIGRNDPCPCGSGKKYKNCHGKEA. Over residues 800 to 817 the composition is skewed to basic and acidic residues; that stretch reads GKPEAKRQPIRKDQHIGR. Zn(2+) contacts are provided by cysteine 821, cysteine 823, cysteine 832, and histidine 833. The segment covering 827-837 has biased composition (basic residues); that stretch reads KKYKNCHGKEA.

It belongs to the SecA family. As to quaternary structure, monomer and homodimer. Part of the essential Sec protein translocation apparatus which comprises SecA, SecYEG and auxiliary proteins SecDF. Other proteins may also be involved. The cofactor is Zn(2+).

The protein resides in the cell membrane. Its subcellular location is the cytoplasm. The catalysed reaction is ATP + H2O + cellular proteinSide 1 = ADP + phosphate + cellular proteinSide 2.. Its function is as follows. Part of the Sec protein translocase complex. Interacts with the SecYEG preprotein conducting channel. Has a central role in coupling the hydrolysis of ATP to the transfer of proteins into and across the cell membrane, serving as an ATP-driven molecular motor driving the stepwise translocation of polypeptide chains across the membrane. The protein is Protein translocase subunit SecA 1 of Listeria monocytogenes serovar 1/2a (strain ATCC BAA-679 / EGD-e).